The sequence spans 376 residues: N-acetyldiaminopimelate deacetylase (376 aa).

Aspartate 69 is an active-site residue. Glutamate 128 acts as the Proton acceptor in catalysis.

Belongs to the peptidase M20A family. N-acetyldiaminopimelate deacetylase subfamily.

The catalysed reaction is N-acetyl-(2S,6S)-2,6-diaminopimelate + H2O = (2S,6S)-2,6-diaminopimelate + acetate. It functions in the pathway amino-acid biosynthesis; L-lysine biosynthesis via DAP pathway; LL-2,6-diaminopimelate from (S)-tetrahydrodipicolinate (acetylase route): step 3/3. Functionally, catalyzes the conversion of N-acetyl-diaminopimelate to diaminopimelate and acetate. This is N-acetyldiaminopimelate deacetylase from Bacillus cereus (strain ATCC 14579 / DSM 31 / CCUG 7414 / JCM 2152 / NBRC 15305 / NCIMB 9373 / NCTC 2599 / NRRL B-3711).